A 367-amino-acid chain; its full sequence is Histidinol-phosphate aminotransferase (367 aa).

An N6-(pyridoxal phosphate)lysine modification is found at Lys227.

This sequence belongs to the class-II pyridoxal-phosphate-dependent aminotransferase family. Histidinol-phosphate aminotransferase subfamily. Homodimer. Pyridoxal 5'-phosphate serves as cofactor.

The catalysed reaction is L-histidinol phosphate + 2-oxoglutarate = 3-(imidazol-4-yl)-2-oxopropyl phosphate + L-glutamate. The protein operates within amino-acid biosynthesis; L-histidine biosynthesis; L-histidine from 5-phospho-alpha-D-ribose 1-diphosphate: step 7/9. This Leptospira borgpetersenii serovar Hardjo-bovis (strain JB197) protein is Histidinol-phosphate aminotransferase.